The chain runs to 527 residues: Peptide chain release factor 3 (527 aa).

One can recognise a tr-type G domain in the interval 9–278 (DIRRTFAIIS…GLTQWAPKPQ (270 aa)). GTP contacts are provided by residues 18-25 (SHPDAGKT), 86-90 (DTPGH), and 140-143 (NKCD).

The protein belongs to the TRAFAC class translation factor GTPase superfamily. Classic translation factor GTPase family. PrfC subfamily.

The protein localises to the cytoplasm. Its function is as follows. Increases the formation of ribosomal termination complexes and stimulates activities of RF-1 and RF-2. It binds guanine nucleotides and has strong preference for UGA stop codons. It may interact directly with the ribosome. The stimulation of RF-1 and RF-2 is significantly reduced by GTP and GDP, but not by GMP. The chain is Peptide chain release factor 3 from Shewanella denitrificans (strain OS217 / ATCC BAA-1090 / DSM 15013).